Reading from the N-terminus, the 325-residue chain is tRNA U34 carboxymethyltransferase (325 aa).

Carboxy-S-adenosyl-L-methionine contacts are provided by residues K91, W105, K110, G130, 152–154 (DPS), 181–182 (ME), M197, Y201, and R316.

Belongs to the class I-like SAM-binding methyltransferase superfamily. CmoB family. In terms of assembly, homotetramer.

The catalysed reaction is carboxy-S-adenosyl-L-methionine + 5-hydroxyuridine(34) in tRNA = 5-carboxymethoxyuridine(34) in tRNA + S-adenosyl-L-homocysteine + H(+). Catalyzes carboxymethyl transfer from carboxy-S-adenosyl-L-methionine (Cx-SAM) to 5-hydroxyuridine (ho5U) to form 5-carboxymethoxyuridine (cmo5U) at position 34 in tRNAs. This chain is tRNA U34 carboxymethyltransferase, found in Saccharophagus degradans (strain 2-40 / ATCC 43961 / DSM 17024).